The following is a 54-amino-acid chain: Large ribosomal subunit protein bL32 (54 aa).

Residues 1–24 (MAVQKSKPTRSKRGMRRSHDSLKE) form a disordered region. The span at 7-16 (KPTRSKRGMR) shows a compositional bias: basic residues.

The protein belongs to the bacterial ribosomal protein bL32 family.

In Buchnera aphidicola subsp. Schizaphis graminum (strain Sg), this protein is Large ribosomal subunit protein bL32.